Here is a 249-residue protein sequence, read N- to C-terminus: MHGLFVNKKKNDTGSTALVLKKIQSGDTKLKEEFIKDNVPYIIRTISNILGIVVDDRNSEEFSIGLAAFNEAIDRYDADKNGNFYTYSFVVIKSRLYDFIRRNRKHNNVLPFSYIEESTRVDERLLMSDASGQFEKIEVRQELVSFEKSLKEFGISLEDLVLSSPKHKDSRLLLIKIARIIADDDNMFRKLVEKKYIPMKEVLSRIKVNHKTIQRNRKFIIAVSLILRSNLYDLKEYVQGFEREGKYHG.

Positions 60 to 73 (EEFSIGLAAFNEAI) match the Polymerase core binding motif. Positions 199-218 (MKEVLSRIKVNHKTIQRNRK) form a DNA-binding region, H-T-H motif.

The protein belongs to the sigma-70 factor family. SigI subfamily. Interacts with RsgI3.

It localises to the cytoplasm. Its activity is regulated as follows. Negatively regulated by the anti-sigma-I factor RsgI3. Binding of the polysaccharide substrate to RsgI3 may lead to the release and activation of SigI3. Functionally, sigma factors are initiation factors that promote the attachment of RNA polymerase to specific initiation sites and are then released. This sigma factor is involved in regulation of cellulosomal genes via an external polysaccharide-sensing mechanism. Recognizes the predicted promoters associated with sigI3 itself, pl11, ce12 and cipA. This Acetivibrio thermocellus (strain ATCC 27405 / DSM 1237 / JCM 9322 / NBRC 103400 / NCIMB 10682 / NRRL B-4536 / VPI 7372) (Clostridium thermocellum) protein is RNA polymerase sigma factor SigI3.